Here is a 92-residue protein sequence, read N- to C-terminus: Small ribosomal subunit protein uS19c (92 aa).

The protein belongs to the universal ribosomal protein uS19 family.

It localises to the plastid. The protein localises to the chloroplast. In terms of biological role, protein S19 forms a complex with S13 that binds strongly to the 16S ribosomal RNA. In Cycas taitungensis (Prince sago), this protein is Small ribosomal subunit protein uS19c.